A 144-amino-acid chain; its full sequence is 3-hydroxyacyl-[acyl-carrier-protein] dehydratase FabZ (144 aa).

His47 is a catalytic residue.

Belongs to the thioester dehydratase family. FabZ subfamily.

The protein resides in the cytoplasm. It carries out the reaction a (3R)-hydroxyacyl-[ACP] = a (2E)-enoyl-[ACP] + H2O. Functionally, involved in unsaturated fatty acids biosynthesis. Catalyzes the dehydration of short chain beta-hydroxyacyl-ACPs and long chain saturated and unsaturated beta-hydroxyacyl-ACPs. The sequence is that of 3-hydroxyacyl-[acyl-carrier-protein] dehydratase FabZ from Alcanivorax borkumensis (strain ATCC 700651 / DSM 11573 / NCIMB 13689 / SK2).